A 381-amino-acid polypeptide reads, in one-letter code: Neuropeptide Y receptor type 2 (381 aa).

The interval 1-35 (MGPIGAEADENQTVEEMKVEQYGPQTTPRGELVPD) is disordered. Topologically, residues 1–51 (MGPIGAEADENQTVEEMKVEQYGPQTTPRGELVPDPEPELIDSTKLIEVQV) are extracellular. N-linked (GlcNAc...) asparagine glycosylation is present at asparagine 11. The helical transmembrane segment at 52–72 (VLILAYCSIILLGVIGNSLVI) threads the bilayer. Residues 73-86 (HVVIKFKSMRTVTN) lie on the Cytoplasmic side of the membrane. Residues 87-107 (FFIANLAVADLLVNTLCLPFT) form a helical membrane-spanning segment. Residues 108–124 (LTYTLMGEWKMGPVLCH) are Extracellular-facing. Cysteine 123 and cysteine 203 are oxidised to a cystine. Residues 125–145 (LVPYAQGLAVQVSTITLTVIA) form a helical membrane-spanning segment. Residues 146 to 165 (LDRHRCIVYHLESKISKRIS) lie on the Cytoplasmic side of the membrane. Residues 166–186 (FLIIGLAWGISALLASPLAIF) traverse the membrane as a helical segment. Topologically, residues 187-216 (REYSLIEIIPDFEIVACTEKWPGEEKSIYG) are extracellular. A helical transmembrane segment spans residues 217 to 237 (TVYSLSSLLILYVLPLGIISF). Topologically, residues 238–268 (SYTRIWSKLKNHVSPGAANDHYHQRRQKTTK) are cytoplasmic. Residues 269–289 (MLVCVVVVFAVSWLPLHAFQL) traverse the membrane as a helical segment. Topologically, residues 290–304 (AVDIDSQVLDLKEYK) are extracellular. Residues 305 to 325 (LIFTVFHIIAMCSTFANPLLY) traverse the membrane as a helical segment. Topologically, residues 326 to 381 (GWMNSNYRKAFLSAFRCEQRLDAIHSEVSVTFKAKKNLEVRKNSGPNDSFTEATNV) are cytoplasmic. Cysteine 342 is lipidated: S-palmitoyl cysteine.

It belongs to the G-protein coupled receptor 1 family. In terms of tissue distribution, high levels in amygdala, corpus callosum, hippocampus and subthalamic nucleus. Also detectable in caudate nucleus, hypothalamus and substantia nigra.

The protein localises to the cell membrane. In terms of biological role, receptor for neuropeptide Y and peptide YY. The rank order of affinity of this receptor for pancreatic polypeptides is PYY &gt; NPY &gt; PYY (3-36) &gt; NPY (2-36) &gt; [Ile-31, Gln-34] PP &gt; [Leu-31, Pro-34] NPY &gt; PP, [Pro-34] PYY and NPY free acid. This is Neuropeptide Y receptor type 2 (NPY2R) from Homo sapiens (Human).